A 150-amino-acid chain; its full sequence is Ribonuclease HI (150 aa).

Residues 1 to 141 enclose the RNase H type-1 domain; the sequence is MKSINAYTDG…VDVLARGQAM (141 aa). Mg(2+) is bound by residues D9, E47, D69, and D133.

Belongs to the RNase H family. In terms of assembly, monomer. Requires Mg(2+) as cofactor.

It localises to the cytoplasm. The catalysed reaction is Endonucleolytic cleavage to 5'-phosphomonoester.. Its function is as follows. Endonuclease that specifically degrades the RNA of RNA-DNA hybrids. This chain is Ribonuclease HI, found in Xylella fastidiosa (strain 9a5c).